Consider the following 381-residue polypeptide: Deoxyguanosinetriphosphate triphosphohydrolase-like protein (381 aa).

The region spanning 76-203 is the HD domain; sequence RMTHTLEVAG…ADLSDEIAYT (128 aa).

This sequence belongs to the dGTPase family. Type 2 subfamily.

This is Deoxyguanosinetriphosphate triphosphohydrolase-like protein from Leptospira interrogans serogroup Icterohaemorrhagiae serovar copenhageni (strain Fiocruz L1-130).